The chain runs to 37 residues: Cytochrome b6-f complex subunit 5 (37 aa).

A helical transmembrane segment spans residues 5-25 (LPSGIVLGLIPITLAGLFVTA).

This sequence belongs to the PetG family. The 4 large subunits of the cytochrome b6-f complex are cytochrome b6, subunit IV (17 kDa polypeptide, PetD), cytochrome f and the Rieske protein, while the 4 small subunits are PetG, PetL, PetM and PetN. The complex functions as a dimer.

The protein resides in the plastid. It localises to the chloroplast thylakoid membrane. Functionally, component of the cytochrome b6-f complex, which mediates electron transfer between photosystem II (PSII) and photosystem I (PSI), cyclic electron flow around PSI, and state transitions. PetG is required for either the stability or assembly of the cytochrome b6-f complex. The polypeptide is Cytochrome b6-f complex subunit 5 (Pinus thunbergii (Japanese black pine)).